A 175-amino-acid polypeptide reads, in one-letter code: uncharacterized protein (175 aa).

5 helical membrane-spanning segments follow: residues 25 to 45 (MIAI…TTIS), 46 to 66 (ATGP…FFLL), 97 to 117 (FAGW…LTAV), 124 to 144 (WLPG…LTLL), and 155 to 175 (TEFW…VTGI).

The protein belongs to the amino acid-polyamine-organocation (APC) superfamily.

The protein localises to the cell membrane. This is an uncharacterized protein from Lactobacillus delbrueckii subsp. lactis.